A 121-amino-acid chain; its full sequence is Large ribosomal subunit protein bL12 (121 aa).

Belongs to the bacterial ribosomal protein bL12 family. Homodimer. Part of the ribosomal stalk of the 50S ribosomal subunit. Forms a multimeric L10(L12)X complex, where L10 forms an elongated spine to which 2 to 4 L12 dimers bind in a sequential fashion. Binds GTP-bound translation factors.

In terms of biological role, forms part of the ribosomal stalk which helps the ribosome interact with GTP-bound translation factors. Is thus essential for accurate translation. The chain is Large ribosomal subunit protein bL12 from Pseudomonas putida (strain GB-1).